Reading from the N-terminus, the 262-residue chain is Shikimate dehydrogenase (NADP(+)) (262 aa).

Shikimate-binding positions include 15–17 (SRS) and Thr-62. Residue Lys-66 is the Proton acceptor of the active site. Glu-78 contributes to the NADP(+) binding site. The shikimate site is built by Asn-87 and Asp-102. NADP(+)-binding positions include 126–130 (GAGGA), 150–155 (NRTLAR), and Met-214. Tyr-216 contributes to the shikimate binding site. Gly-236 contributes to the NADP(+) binding site.

It belongs to the shikimate dehydrogenase family. As to quaternary structure, homodimer.

The enzyme catalyses shikimate + NADP(+) = 3-dehydroshikimate + NADPH + H(+). Its pathway is metabolic intermediate biosynthesis; chorismate biosynthesis; chorismate from D-erythrose 4-phosphate and phosphoenolpyruvate: step 4/7. Involved in the biosynthesis of the chorismate, which leads to the biosynthesis of aromatic amino acids. Catalyzes the reversible NADPH linked reduction of 3-dehydroshikimate (DHSA) to yield shikimate (SA). The protein is Shikimate dehydrogenase (NADP(+)) of Acinetobacter baumannii (strain ATCC 17978 / DSM 105126 / CIP 53.77 / LMG 1025 / NCDC KC755 / 5377).